The following is a 485-amino-acid chain: ATP synthase subunit beta (485 aa).

Residue 158-165 participates in ATP binding; sequence GGAGVGKT.

It belongs to the ATPase alpha/beta chains family. In terms of assembly, F-type ATPases have 2 components, CF(1) - the catalytic core - and CF(0) - the membrane proton channel. CF(1) has five subunits: alpha(3), beta(3), gamma(1), delta(1), epsilon(1). CF(0) has four main subunits: a(1), b(1), b'(1) and c(9-12).

It localises to the cell inner membrane. It catalyses the reaction ATP + H2O + 4 H(+)(in) = ADP + phosphate + 5 H(+)(out). In terms of biological role, produces ATP from ADP in the presence of a proton gradient across the membrane. The catalytic sites are hosted primarily by the beta subunits. The chain is ATP synthase subunit beta from Erythrobacter litoralis (strain HTCC2594).